Reading from the N-terminus, the 400-residue chain is MSKKTVASLSAADISGKRALVRVDFNVPLDDQGNITDDTRIRAALPTIQDLTQKGAKVILASHFGRPKGVDEKLRLTPVAKRLSELLGQEVIKTDDSIGDEVAAKVATLQNGQVLLLENVRFYKEEEKNDPEFAKKLAANADFYVNDAFGTAHRAHASTEGVTKFLSPSVAGYLVEKELQYLQSAIENPQRPLAAIIGGSKVSSKIGVIETLLEKCDKLIIGGGMIFTFYKARGLNVGKSLVEEDKLELAKSLEAKAKERGVSLLLPTDVVLADNFAPDANSQTVSIENIPDGWMGLDIGPDSVKVFQAALADTKTVIWNGPMGVFEFDKFAAGTEAIAHTLAEIGKTGTTTIIGGGDSVAAVEKVGLADQMSHISTGGGASLELLEGKVLPGIAALDEA.

Substrate contacts are provided by residues 24–26, Arg40, 63–66, Arg121, and Arg154; these read DFN and HFGR. Residues Lys205, Gly296, Glu327, and 356–359 contribute to the ATP site; that span reads GGDS.

In terms of assembly, monomer.

It localises to the cytoplasm. The enzyme catalyses (2R)-3-phosphoglycerate + ATP = (2R)-3-phospho-glyceroyl phosphate + ADP. The protein operates within carbohydrate degradation; glycolysis; pyruvate from D-glyceraldehyde 3-phosphate: step 2/5. This chain is Phosphoglycerate kinase, found in Nostoc sp. (strain PCC 7120 / SAG 25.82 / UTEX 2576).